The following is a 298-amino-acid chain: GTPase Era (298 aa).

The 168-residue stretch at 4 to 171 folds into the Era-type G domain; it reads KSGFVSVIGR…LKEALDYIPE (168 aa). The G1 stretch occupies residues 12 to 19; it reads GRPNVGKS. GTP is bound at residue 12–19; the sequence is GRPNVGKS. The segment at 38-42 is G2; it reads QTTRN. Residues 59–62 are G3; that stretch reads DTPG. GTP is bound by residues 59-63 and 121-124; these read DTPGI and NKVD. The G4 stretch occupies residues 121–124; the sequence is NKVD. The segment at 150–152 is G5; that stretch reads ISA. A KH type-2 domain is found at 202–279; that stretch reads LDDEVPHGVG…FLELWVKVKP (78 aa).

It belongs to the TRAFAC class TrmE-Era-EngA-EngB-Septin-like GTPase superfamily. Era GTPase family. In terms of assembly, monomer.

The protein localises to the cytoplasm. It localises to the cell membrane. Functionally, an essential GTPase that binds both GDP and GTP, with rapid nucleotide exchange. Plays a role in 16S rRNA processing and 30S ribosomal subunit biogenesis and possibly also in cell cycle regulation and energy metabolism. This is GTPase Era from Ruminiclostridium cellulolyticum (strain ATCC 35319 / DSM 5812 / JCM 6584 / H10) (Clostridium cellulolyticum).